Reading from the N-terminus, the 439-residue chain is Taxadien-5-alpha-ol O-acetyltransferase (439 aa).

Active-site proton acceptor residues include histidine 164 and aspartate 373.

It belongs to the plant acyltransferase family.

It carries out the reaction taxa-4(20),11-dien-5alpha-ol + acetyl-CoA = taxa-4(20),11-dien-5alpha-yl acetate + CoA. It functions in the pathway alkaloid biosynthesis; taxol biosynthesis; 10-deacetyl-2-debenzoylbaccatin III from taxa-4(20),11-dien-5alpha-ol: step 1/3. The chain is Taxadien-5-alpha-ol O-acetyltransferase (TAT) from Taxus cuspidata (Japanese yew).